The primary structure comprises 392 residues: Metallophosphoesterase 1 (392 aa).

A helical membrane pass occupies residues 25-45 (KLAALVFAVVLFCEFLIYYLV). A divalent metal cation is bound by residues Asp73, Asp115, Asn153, His246, His300, and His302. Residues 352–372 (DTVLATYCVAAGLLVVLILVH) form a helical membrane-spanning segment.

It belongs to the metallophosphoesterase superfamily. MPPE1 family. In terms of assembly, interacts with GPI-anchor proteins (via the GPI portion). Interacts with TMED10. Mn(2+) is required as a cofactor.

The protein resides in the endoplasmic reticulum-Golgi intermediate compartment membrane. Its function is as follows. Metallophosphoesterase that catalyzes the removal of a side-chain ethanolamine-phosphate (EtNP) from the second mannose of the GPI-anchor protein intermediate. Participates in the glycan remodeling steps of GPI-anchor maturation to allow an efficient transport of GPI-anchor proteins from the endoplasmic reticulum to the Golgi. The chain is Metallophosphoesterase 1 from Ailuropoda melanoleuca (Giant panda).